We begin with the raw amino-acid sequence, 683 residues long: Methionine--tRNA ligase (683 aa).

Residues 15–25 carry the 'HIGH' region motif; that stretch reads PYANGPIHLGH. The Zn(2+) site is built by Cys-146, Cys-149, Cys-159, and Cys-162. Positions 332-336 match the 'KMSKS' region motif; it reads KMSKS. Lys-335 contacts ATP. The region spanning 581-683 is the tRNA-binding domain; the sequence is DFCKVDLRVA…AGAKAGQRVK (103 aa).

It belongs to the class-I aminoacyl-tRNA synthetase family. MetG type 1 subfamily. Homodimer. Zn(2+) is required as a cofactor.

The protein localises to the cytoplasm. It carries out the reaction tRNA(Met) + L-methionine + ATP = L-methionyl-tRNA(Met) + AMP + diphosphate. Is required not only for elongation of protein synthesis but also for the initiation of all mRNA translation through initiator tRNA(fMet) aminoacylation. The protein is Methionine--tRNA ligase of Histophilus somni (strain 2336) (Haemophilus somnus).